A 224-amino-acid polypeptide reads, in one-letter code: Proteasome subunit beta (224 aa).

Residues 1-6 constitute a propeptide, removed in mature form; by autocatalysis; it reads MDVMKG. The active-site Nucleophile is Thr-7.

This sequence belongs to the peptidase T1B family. In terms of assembly, the 20S proteasome core is composed of 14 alpha and 14 beta subunits that assemble into four stacked heptameric rings, resulting in a barrel-shaped structure. The two inner rings, each composed of seven catalytic beta subunits, are sandwiched by two outer rings, each composed of seven alpha subunits. The catalytic chamber with the active sites is on the inside of the barrel. Has a gated structure, the ends of the cylinder being occluded by the N-termini of the alpha-subunits. Is capped at one or both ends by the proteasome regulatory ATPase, PAN.

Its subcellular location is the cytoplasm. It catalyses the reaction Cleavage of peptide bonds with very broad specificity.. The formation of the proteasomal ATPase PAN-20S proteasome complex, via the docking of the C-termini of PAN into the intersubunit pockets in the alpha-rings, triggers opening of the gate for substrate entry. Interconversion between the open-gate and close-gate conformations leads to a dynamic regulation of the 20S proteasome proteolysis activity. Functionally, component of the proteasome core, a large protease complex with broad specificity involved in protein degradation. This chain is Proteasome subunit beta, found in Methanocaldococcus sp. (strain FS406-22).